The sequence spans 359 residues: 5-amino-6-(D-ribitylamino)uracil--L-tyrosine 4-hydroxyphenyl transferase 1 (359 aa).

Residues 45 to 282 enclose the Radical SAM core domain; that stretch reads VTYVVNANIN…VYAISRIFFK (238 aa). Residues Cys59, Cys63, and Cys66 each contribute to the [4Fe-4S] cluster site.

It belongs to the radical SAM superfamily. CofH family. In terms of assembly, consists of two subunits, CofG and CofH. Requires [4Fe-4S] cluster as cofactor.

The enzyme catalyses 5-amino-6-(D-ribitylamino)uracil + L-tyrosine + S-adenosyl-L-methionine = 5-amino-5-(4-hydroxybenzyl)-6-(D-ribitylimino)-5,6-dihydrouracil + 2-iminoacetate + 5'-deoxyadenosine + L-methionine + H(+). Its pathway is cofactor biosynthesis; coenzyme F0 biosynthesis. In terms of biological role, catalyzes the radical-mediated synthesis of 5-amino-5-(4-hydroxybenzyl)-6-(D-ribitylimino)-5,6-dihydrouracil from 5-amino-6-(D-ribitylamino)uracil and L-tyrosine. This chain is 5-amino-6-(D-ribitylamino)uracil--L-tyrosine 4-hydroxyphenyl transferase 1, found in Methanococcus maripaludis (strain DSM 14266 / JCM 13030 / NBRC 101832 / S2 / LL).